Reading from the N-terminus, the 507-residue chain is ATP synthase subunit alpha, chloroplastic (507 aa).

Residue 170-177 (GDRQTGKT) participates in ATP binding.

Belongs to the ATPase alpha/beta chains family. F-type ATPases have 2 components, CF(1) - the catalytic core - and CF(0) - the membrane proton channel. CF(1) has five subunits: alpha(3), beta(3), gamma(1), delta(1), epsilon(1). CF(0) has four main subunits: a, b, b' and c.

The protein localises to the plastid. Its subcellular location is the chloroplast thylakoid membrane. It catalyses the reaction ATP + H2O + 4 H(+)(in) = ADP + phosphate + 5 H(+)(out). Its function is as follows. Produces ATP from ADP in the presence of a proton gradient across the membrane. The alpha chain is a regulatory subunit. The chain is ATP synthase subunit alpha, chloroplastic from Cycas taitungensis (Prince sago).